Reading from the N-terminus, the 2098-residue chain is Unconventional myosin heavy chain 6 (2098 aa).

Positions glutamine 62 to tyrosine 732 constitute a Myosin motor domain. Position 155–162 (glycine 155–threonine 162) interacts with ATP. Actin-binding stretches follow at residues leucine 609–glutamate 631 and glutamine 711–leucine 725. IQ domains follow at residues leucine 735–lysine 757, glutamine 758–arginine 787, and leucine 804–lysine 833. The tract at residues phenylalanine 860–proline 898 is disordered. The 240-residue stretch at histidine 929 to lysine 1168 folds into the MyTH4 1 domain. The 41-residue stretch at lysine 1171–serine 1211 folds into the Ras-associating domain. The region spanning valine 1173–serine 1481 is the FERM 1 domain. An SH3 domain is found at lysine 1479–threonine 1547. The region spanning phenylalanine 1624–glutamine 1772 is the MyTH4 2 domain. Positions isoleucine 1778–glutamine 2086 constitute an FERM 2 domain.

Belongs to the TRAFAC class myosin-kinesin ATPase superfamily. Myosin family. In terms of assembly, interacts with unc-98.

It localises to the cytoplasm. Myosins are actin-based motor molecules with ATPase activity. Unconventional myosins serve in intracellular movements. Their highly divergent tails are presumed to bind to membranous compartments, which would be moved relative to actin filaments. This chain is Unconventional myosin heavy chain 6, found in Caenorhabditis elegans.